The chain runs to 862 residues: DNA replication licensing factor MCM4 (862 aa).

The span at 1–10 (MSSPASTPSR) shows a compositional bias: low complexity. 2 disordered regions span residues 1 to 71 (MSSP…FSSP) and 90 to 121 (TYGT…GSAR). Ser-2 is modified (N-acetylserine). Position 6 is a phosphoserine (Ser-6). Thr-7 and Thr-19 each carry phosphothreonine. A phosphoserine mark is found at Ser-26, Ser-31, and Ser-32. The span at 61 to 71 (PPAQNALFSSP) shows a compositional bias: polar residues. Position 101 is a phosphothreonine (Thr-101). Residue Ser-104 is modified to Phosphoserine. Thr-109 is modified (phosphothreonine). Phosphoserine occurs at positions 119, 130, 141, and 144. The residue at position 219 (Lys-219) is an N6-acetyllysine. Residue Lys-438 forms a Glycyl lysine isopeptide (Lys-Gly) (interchain with G-Cter in SUMO2) linkage. Lys-449 bears the N6-acetyllysine mark. An MCM domain is found at 457–666 (IYERLASALA…YDRRLAHHLV (210 aa)). ATP contacts are provided by Tyr-470, Arg-496, Lys-515, Ser-516, Asn-617, Arg-642, Arg-731, and Glu-734. The Arginine finger motif lies at 641 to 644 (SRFD). A Glycyl lysine isopeptide (Lys-Gly) (interchain with G-Cter in SUMO2) cross-link involves residue Lys-797. Lys-857 carries the N6-acetyllysine modification.

The protein belongs to the MCM family. In terms of assembly, component of the MCM2-7 complex. The complex forms a toroidal hexameric ring with the proposed subunit order MCM2-MCM6-MCM4-MCM7-MCM3-MCM5. Component of the CMG helicase complex, a hexameric ring of related MCM2-7 subunits stabilized by CDC45 and the tetrameric GINS complex. Interacts with MCMBP. In terms of processing, sumoylated; SUMO2 modified in response to stress caused by inhibition of proteasome activity (in vitro).

Its subcellular location is the nucleus. The protein localises to the chromosome. It catalyses the reaction ATP + H2O = ADP + phosphate + H(+). Acts as a component of the MCM2-7 complex (MCM complex) which is the replicative helicase essential for 'once per cell cycle' DNA replication initiation and elongation in eukaryotic cells. Core component of CDC45-MCM-GINS (CMG) helicase, the molecular machine that unwinds template DNA during replication, and around which the replisome is built. The active ATPase sites in the MCM2-7 ring are formed through the interaction surfaces of two neighboring subunits such that a critical structure of a conserved arginine finger motif is provided in trans relative to the ATP-binding site of the Walker A box of the adjacent subunit. The six ATPase active sites, however, are likely to contribute differentially to the complex helicase activity. The chain is DNA replication licensing factor MCM4 (Mcm4) from Mus musculus (Mouse).